The primary structure comprises 275 residues: Dermonecrotic toxin LhSicTox-alphaIV2 (275 aa).

The active site involves His-5. Residues Glu-25 and Asp-27 each coordinate Mg(2+). Catalysis depends on His-41, which acts as the Nucleophile. Cystine bridges form between Cys-45/Cys-51 and Cys-47/Cys-192. Asp-85 lines the Mg(2+) pocket.

Belongs to the arthropod phospholipase D family. Class II subfamily. Requires Mg(2+) as cofactor. In terms of tissue distribution, expressed by the venom gland.

The protein localises to the secreted. It catalyses the reaction an N-(acyl)-sphingosylphosphocholine = an N-(acyl)-sphingosyl-1,3-cyclic phosphate + choline. The catalysed reaction is an N-(acyl)-sphingosylphosphoethanolamine = an N-(acyl)-sphingosyl-1,3-cyclic phosphate + ethanolamine. The enzyme catalyses a 1-acyl-sn-glycero-3-phosphocholine = a 1-acyl-sn-glycero-2,3-cyclic phosphate + choline. It carries out the reaction a 1-acyl-sn-glycero-3-phosphoethanolamine = a 1-acyl-sn-glycero-2,3-cyclic phosphate + ethanolamine. Dermonecrotic toxins cleave the phosphodiester linkage between the phosphate and headgroup of certain phospholipids (sphingolipid and lysolipid substrates), forming an alcohol (often choline) and a cyclic phosphate. This toxin acts on sphingomyelin (SM). It may also act on ceramide phosphoethanolamine (CPE), lysophosphatidylcholine (LPC) and lysophosphatidylethanolamine (LPE), but not on lysophosphatidylserine (LPS), and lysophosphatidylglycerol (LPG). It acts by transphosphatidylation, releasing exclusively cyclic phosphate products as second products. Induces dermonecrosis, hemolysis, increased vascular permeability, edema, inflammatory response, and platelet aggregation. The chain is Dermonecrotic toxin LhSicTox-alphaIV2 from Loxosceles hirsuta (Recluse spider).